A 503-amino-acid chain; its full sequence is Glutamate/gamma-aminobutyrate antiporter (503 aa).

Position 33 to 43 (33 to 43 (LHLVFFLLLGG)) interacts with L-glutamate. The next 7 helical transmembrane spans lie at 35-55 (LVFFLLLGGLLWFLPVALCAA), 153-173 (FVVGIVIPSVILFGLAAAYFI), 194-214 (VSTLVVFVSFILAYMGVEASA), 232-252 (ILLVILAISLDAIGGFSVAAV), 366-386 (LTVVIYLVGYLLFFIVYFVLI), 407-427 (IIAGIGFLLSIFALFISFVPP), and 440-460 (MILLISFVVTAILPFIIYELH).

The protein belongs to the amino acid-polyamine-organocation (APC) superfamily. Glutamate:GABA antiporter (GGA) (TC 2.A.3.7) family.

The protein localises to the cell membrane. It catalyses the reaction 4-aminobutanoate(in) + L-glutamate(out) = 4-aminobutanoate(out) + L-glutamate(in). Involved in glutaminase-dependent acid resistance. Exchanges extracellular glutamate (Glu) for intracellular gamma-aminobutyric acid (GABA) under acidic conditions. This Lactococcus lactis subsp. cremoris (strain MG1363) protein is Glutamate/gamma-aminobutyrate antiporter.